We begin with the raw amino-acid sequence, 306 residues long: Beta-lactamase (306 aa).

The first 34 residues, 1-34, serve as a signal peptide directing secretion; it reads MNVKRKATLKFGICIGLLCVSFTGFNSLFGSTHA. The active-site Acyl-ester intermediate is serine 89. 251–253 contributes to the substrate binding site; that stretch reads KSG.

This sequence belongs to the class-A beta-lactamase family.

The catalysed reaction is a beta-lactam + H2O = a substituted beta-amino acid. Functionally, this protein is a beta-lactamase with a substrate specificity for penicillins. The chain is Beta-lactamase (penP) from Bacillus amyloliquefaciens (Bacillus velezensis).